Reading from the N-terminus, the 345-residue chain is Thylakoid lumenal 29 kDa protein, chloroplastic (345 aa).

Belongs to the peroxidase family.

It is found in the plastid. The protein localises to the chloroplast thylakoid lumen. The sequence is that of Thylakoid lumenal 29 kDa protein, chloroplastic (CLEB3J9) from Solanum lycopersicum (Tomato).